We begin with the raw amino-acid sequence, 372 residues long: MSNQHAXMXSNLLPVGSNISTWWNFGSMLLACLMLQIMTGFFLAIHYTANISLAFSSVIHITRDVPYGWIMQNLHTISASLFFICIYTHIARGLYYGLYLNKEVWLSGTALLVTLMATAFFGYVLPWGQMSFWAATVITNLLTAIPYLGVTLTTWLWGGFSINDPTLTRFFALHFILPFIIISLSSVHIILLHSEGSNNPLGTNSDIDKIPFHPYHSYKDMLMITSMITLLLLILSFSPDLLNDPENFSKANPLVTPQHIKPEWYFLFAYGILRSIPNKLGGTLALLLSVMILTTTPFTHTSFTRSMMFRPLSQILFWTLIATFITITWTASKPVEPPFITISQTTSIFYFSFFILTPLLGWTENKMMMTNN.

The next 4 helical transmembrane spans lie at 25–45 (FGSM…FLAI), 69–90 (WIMQ…YTHI), 105–125 (WLSG…GYVL), and 170–190 (FFAL…VHII). H75 and H89 together coordinate heme b. Heme b-binding residues include H174 and H188. A ubiquinone is bound at residue H193. 4 helical membrane-spanning segments follow: residues 218 to 238 (YKDM…LSFS), 280 to 300 (LGGT…PFTH), 312 to 332 (LSQI…WTAS), and 339 to 358 (FITI…ILTP).

This sequence belongs to the cytochrome b family. As to quaternary structure, the cytochrome bc1 complex contains 3 respiratory subunits (MT-CYB, CYC1 and UQCRFS1), 2 core proteins (UQCRC1 and UQCRC2) and probably 6 low-molecular weight proteins. Heme b serves as cofactor.

The protein localises to the mitochondrion inner membrane. Its function is as follows. Component of the ubiquinol-cytochrome c reductase complex (complex III or cytochrome b-c1 complex) that is part of the mitochondrial respiratory chain. The b-c1 complex mediates electron transfer from ubiquinol to cytochrome c. Contributes to the generation of a proton gradient across the mitochondrial membrane that is then used for ATP synthesis. In Naja kaouthia (Monocled cobra), this protein is Cytochrome b (MT-CYB).